The following is a 381-amino-acid chain: Lipid-A-disaccharide synthase (381 aa).

It belongs to the LpxB family.

It carries out the reaction a lipid X + a UDP-2-N,3-O-bis[(3R)-3-hydroxyacyl]-alpha-D-glucosamine = a lipid A disaccharide + UDP + H(+). Its pathway is bacterial outer membrane biogenesis; LPS lipid A biosynthesis. Condensation of UDP-2,3-diacylglucosamine and 2,3-diacylglucosamine-1-phosphate to form lipid A disaccharide, a precursor of lipid A, a phosphorylated glycolipid that anchors the lipopolysaccharide to the outer membrane of the cell. The protein is Lipid-A-disaccharide synthase of Rickettsia bellii (strain OSU 85-389).